Reading from the N-terminus, the 488-residue chain is Bifunctional protein HldE (488 aa).

Residues 1-330 (MDRKSIESIF…NAVALAHSDS (330 aa)) form a ribokinase region. 205-208 (NRRE) serves as a coordination point for ATP. Residue Asp-275 is part of the active site. A cytidylyltransferase region spans residues 356–488 (FTNGCFDLLH…IIERVLERYS (133 aa)).

It in the N-terminal section; belongs to the carbohydrate kinase PfkB family. In the C-terminal section; belongs to the cytidylyltransferase family. Homodimer.

The enzyme catalyses D-glycero-beta-D-manno-heptose 7-phosphate + ATP = D-glycero-beta-D-manno-heptose 1,7-bisphosphate + ADP + H(+). It carries out the reaction D-glycero-beta-D-manno-heptose 1-phosphate + ATP + H(+) = ADP-D-glycero-beta-D-manno-heptose + diphosphate. It functions in the pathway nucleotide-sugar biosynthesis; ADP-L-glycero-beta-D-manno-heptose biosynthesis; ADP-L-glycero-beta-D-manno-heptose from D-glycero-beta-D-manno-heptose 7-phosphate: step 1/4. It participates in nucleotide-sugar biosynthesis; ADP-L-glycero-beta-D-manno-heptose biosynthesis; ADP-L-glycero-beta-D-manno-heptose from D-glycero-beta-D-manno-heptose 7-phosphate: step 3/4. Catalyzes the phosphorylation of D-glycero-D-manno-heptose 7-phosphate at the C-1 position to selectively form D-glycero-beta-D-manno-heptose-1,7-bisphosphate. In terms of biological role, catalyzes the ADP transfer from ATP to D-glycero-beta-D-manno-heptose 1-phosphate, yielding ADP-D-glycero-beta-D-manno-heptose. The polypeptide is Bifunctional protein HldE (Pelobacter propionicus (strain DSM 2379 / NBRC 103807 / OttBd1)).